The sequence spans 293 residues: Ribosomal protein L11 methyltransferase (293 aa).

S-adenosyl-L-methionine is bound by residues Thr-145, Gly-166, Asp-188, and Asn-230.

This sequence belongs to the methyltransferase superfamily. PrmA family.

Its subcellular location is the cytoplasm. It carries out the reaction L-lysyl-[protein] + 3 S-adenosyl-L-methionine = N(6),N(6),N(6)-trimethyl-L-lysyl-[protein] + 3 S-adenosyl-L-homocysteine + 3 H(+). In terms of biological role, methylates ribosomal protein L11. The chain is Ribosomal protein L11 methyltransferase from Escherichia coli O81 (strain ED1a).